Consider the following 163-residue polypeptide: Small ribosomal subunit protein uS5 (163 aa).

One can recognise an S5 DRBM domain in the interval 8-71 (LIEKIVDLNR…ERAKKGMVQV (64 aa)).

The protein belongs to the universal ribosomal protein uS5 family. Part of the 30S ribosomal subunit. Contacts proteins S4 and S8.

In terms of biological role, with S4 and S12 plays an important role in translational accuracy. Its function is as follows. Located at the back of the 30S subunit body where it stabilizes the conformation of the head with respect to the body. This chain is Small ribosomal subunit protein uS5, found in Oleidesulfovibrio alaskensis (strain ATCC BAA-1058 / DSM 17464 / G20) (Desulfovibrio alaskensis).